Consider the following 430-residue polypeptide: Tumor necrosis factor receptor superfamily member 19L (430 aa).

Residues 1–25 (MKPSLLCRPLSCFLMLLPWPLATLT) form the signal peptide. Topologically, residues 26 to 162 (STTLWQCPPG…AGGPEETAAQ (137 aa)) are extracellular. One copy of the TNFR-Cys repeat lies at 50–90 (PCPPGTFSAAWGSSPCQPHARCSLWRRLEAQVGMATRDTLC). 2 disulfides stabilise this stretch: C51–C65 and C71–C90. The span at 134–143 (VAAGASSGGE) shows a compositional bias: low complexity. The tract at residues 134–156 (VAAGASSGGETRQPGNGTRAGGP) is disordered. Residue N149 is glycosylated (N-linked (GlcNAc...) asparagine). A helical membrane pass occupies residues 163-183 (YAVIAIVPVFCLMGLLGILVC). The Cytoplasmic portion of the chain corresponds to 184–430 (NLLKRKGYHC…VRLSESNLVI (247 aa)). T223 is modified (phosphothreonine). Positions 349 to 352 (RFRV) match the RFRV motif; mediates interaction with STK39 motif. Residues 373 to 410 (AGPSWGDLPDSPQPGLPPEQQALLGSGGSRTKWLKPPA) are disordered.

This sequence belongs to the RELT family. As to quaternary structure, interacts with TRAF1. Interacts with RELL1, RELL2 and OXSR1. Interacts with PLSCR1. Interacts with STK39. Post-translationally, phosphorylated in vitro by OXSR1. Phosphorylated by STK39. Spleen, lymph node, brain, breast and peripheral blood leukocytes (at protein level). Expressed highly in bone marrow and fetal liver. Very low levels in skeletal muscle, testis and colon. Not detected in kidney and pancreas.

The protein resides in the cell membrane. Its subcellular location is the cytoplasm. It is found in the perinuclear region. Functionally, may play a role in apoptosis. Induces activation of MAPK14/p38 and MAPK8/JNK MAPK cascades, when overexpressed. Involved in dental enamel formation. The sequence is that of Tumor necrosis factor receptor superfamily member 19L (RELT) from Homo sapiens (Human).